A 95-amino-acid polypeptide reads, in one-letter code: Integration host factor subunit beta (95 aa).

This sequence belongs to the bacterial histone-like protein family. Heterodimer of an alpha and a beta chain.

Its function is as follows. This protein is one of the two subunits of integration host factor, a specific DNA-binding protein that functions in genetic recombination as well as in transcriptional and translational control. This Ruegeria sp. (strain TM1040) (Silicibacter sp.) protein is Integration host factor subunit beta.